A 98-amino-acid polypeptide reads, in one-letter code: NADH-ubiquinone oxidoreductase chain 4L (98 aa).

Helical transmembrane passes span 1-21 (MSLVHMNILLAFTMSLTGLLM), 29-49 (ALLCLEGMMLSLFILMTITIL), and 59-79 (TPIILLVFAACEAAVGLALLV).

It belongs to the complex I subunit 4L family. Core subunit of respiratory chain NADH dehydrogenase (Complex I) which is composed of 45 different subunits.

Its subcellular location is the mitochondrion inner membrane. It carries out the reaction a ubiquinone + NADH + 5 H(+)(in) = a ubiquinol + NAD(+) + 4 H(+)(out). In terms of biological role, core subunit of the mitochondrial membrane respiratory chain NADH dehydrogenase (Complex I) which catalyzes electron transfer from NADH through the respiratory chain, using ubiquinone as an electron acceptor. Part of the enzyme membrane arm which is embedded in the lipid bilayer and involved in proton translocation. In Lipotes vexillifer (Yangtze river dolphin), this protein is NADH-ubiquinone oxidoreductase chain 4L (MT-ND4L).